The chain runs to 518 residues: OTU domain-containing protein 5 (518 aa).

Disordered stretches follow at residues 1–79 and 105–144; these read MTIL…SGGA and PGHSKRRRQGVSAGPGAPGSSPDREDGAGNNSEDEYETAA. Residues 39-53 show a composition bias toward pro residues; the sequence is SSPPPRWAYPGNPAP. Over residues 116–125 the composition is skewed to low complexity; sequence SAGPGAPGSS. Residues 171 to 294 form the OTU domain; the sequence is FIIKQMKEDG…NIHYNSVVNP (124 aa). Positions 176-182 are cys-loop; that stretch reads MKEDGAC. Asp-179 is an active-site residue. The Nucleophile role is filled by Cys-182. Positions 231-241 are variable-loop; the sequence is KRKNNCHGNHI. The tract at residues 282 to 287 is his-loop; sequence YHRNIH. Residue His-287 is part of the active site. A disordered region spans residues 371–450; it reads ARQPRKASAT…GPSNQTCAGA (80 aa). Positions 377-390 are enriched in low complexity; it reads ASATCSSATAAASS.

It belongs to the peptidase C85 family.

The catalysed reaction is Thiol-dependent hydrolysis of ester, thioester, amide, peptide and isopeptide bonds formed by the C-terminal Gly of ubiquitin (a 76-residue protein attached to proteins as an intracellular targeting signal).. Functionally, deubiquitinating enzyme that may function as negative regulator of the innate immune system. Has peptidase activity towards 'Lys-48'- and 'Lys-63'-linked polyubiquitin chains. Can also cleave 'Lys-11'-linked ubiquitin chains (in vitro). This Xenopus tropicalis (Western clawed frog) protein is OTU domain-containing protein 5 (otud5).